We begin with the raw amino-acid sequence, 88 residues long: Large ribosomal subunit protein bL27 (88 aa).

The tract at residues 1 to 24 is disordered; that stretch reads MAHKKGTGSTRNGRDSNSKRLGVK.

The protein belongs to the bacterial ribosomal protein bL27 family.

The sequence is that of Large ribosomal subunit protein bL27 from Prochlorococcus marinus (strain MIT 9313).